A 238-amino-acid polypeptide reads, in one-letter code: Ribonuclease PH (238 aa).

Phosphate-binding positions include Arg-86 and 124-126 (GTR).

Belongs to the RNase PH family. Homohexameric ring arranged as a trimer of dimers.

It catalyses the reaction tRNA(n+1) + phosphate = tRNA(n) + a ribonucleoside 5'-diphosphate. Functionally, phosphorolytic 3'-5' exoribonuclease that plays an important role in tRNA 3'-end maturation. Removes nucleotide residues following the 3'-CCA terminus of tRNAs; can also add nucleotides to the ends of RNA molecules by using nucleoside diphosphates as substrates, but this may not be physiologically important. Probably plays a role in initiation of 16S rRNA degradation (leading to ribosome degradation) during starvation. The polypeptide is Ribonuclease PH (Proteus mirabilis (strain HI4320)).